Here is a 357-residue protein sequence, read N- to C-terminus: Membrane-bound lytic murein transglycosylase C (357 aa).

Positions methionine 1–serine 16 are cleaved as a signal peptide. Residue cysteine 17 is the site of N-palmitoyl cysteine attachment. The S-diacylglycerol cysteine moiety is linked to residue cysteine 17.

This sequence belongs to the transglycosylase Slt family.

The protein localises to the cell outer membrane. The enzyme catalyses Exolytic cleavage of the (1-&gt;4)-beta-glycosidic linkage between N-acetylmuramic acid (MurNAc) and N-acetylglucosamine (GlcNAc) residues in peptidoglycan, from either the reducing or the non-reducing ends of the peptidoglycan chains, with concomitant formation of a 1,6-anhydrobond in the MurNAc residue.. Functionally, murein-degrading enzyme. May play a role in recycling of muropeptides during cell elongation and/or cell division. This chain is Membrane-bound lytic murein transglycosylase C, found in Sodalis glossinidius (strain morsitans).